Consider the following 206-residue polypeptide: Putative apoptosis inhibitor 021L (206 aa).

The segment covering Thr-95–Ser-105 has biased composition (polar residues). The segment at Thr-95–Asp-114 is disordered. The segment at Cys-157–Arg-195 adopts an RING-type zinc-finger fold.

The protein belongs to the IIV-6 193R family.

In terms of biological role, plays a role early in infection by preventing host cell apoptosis. The polypeptide is Putative apoptosis inhibitor 021L (Aedes vexans (Inland floodwater mosquito)).